Consider the following 295-residue polypeptide: Zygote arrest protein 1.S (295 aa).

Disordered stretches follow at residues 80 to 115 (SVQCSLGPRTLLRRRPGALRKPPPEQGSPASPTKTV) and 144 to 186 (EKGE…APAQ). Positions 144–176 (EKGEAVRSEGSEGGRQEGKQGDGEIKEQMKMDK) are enriched in basic and acidic residues. The 3CxxC-type zinc-finger motif lies at 197 to 280 (KYGYYHCKDC…RQDLCGRCKG (84 aa)).

The protein belongs to the ZAR1 family. In terms of tissue distribution, ovary. Also expressed in lung and muscle.

The protein localises to the cytoplasm. It is found in the cytoplasmic ribonucleoprotein granule. In terms of biological role, mRNA-binding protein required for maternal mRNA storage, translation and degradation during oocyte maturation. Probably promotes formation of some phase-separated membraneless compartment that stores maternal mRNAs in oocytes: acts by undergoing liquid-liquid phase separation upon binding to maternal mRNAs. Binds to the 3'-UTR of maternal mRNAs in immature oocytes, inhibiting their translation. This chain is Zygote arrest protein 1.S (zar1.S), found in Xenopus laevis (African clawed frog).